A 30-amino-acid chain; its full sequence is Cycloviolacin-O10 (30 aa).

Positions 1-30 (GIPCGESCVYIPCLTSAVGCSCKSKVCYRN) form a cross-link, cyclopeptide (Gly-Asn). 3 disulfides stabilise this stretch: Cys4–Cys20, Cys8–Cys22, and Cys13–Cys27.

In terms of processing, this is a cyclic peptide. In terms of tissue distribution, expressed in petals and roots but not in leaves, petioles and runners (at protein level).

Probably participates in a plant defense mechanism. This is Cycloviolacin-O10 from Viola odorata (Sweet violet).